Consider the following 925-residue polypeptide: Bifunctional uridylyltransferase/uridylyl-removing enzyme (925 aa).

Residues 1–382 are uridylyltransferase; sequence MVLPTTKDAT…PPGAEVRRVP (382 aa). The tract at residues 383 to 738 is uridylyl-removing; the sequence is DSDDFIIDNN…VGFDEARGVT (356 aa). The region spanning 498–621 is the HD domain; the sequence is VDEHLIRCIG…VQSVERMKLL (124 aa). ACT domains follow at residues 739–820 and 849–925; these read ELTI…DVMP and MIEV…NTAE.

The protein belongs to the GlnD family. Mg(2+) is required as a cofactor.

It catalyses the reaction [protein-PII]-L-tyrosine + UTP = [protein-PII]-uridylyl-L-tyrosine + diphosphate. It carries out the reaction [protein-PII]-uridylyl-L-tyrosine + H2O = [protein-PII]-L-tyrosine + UMP + H(+). Its activity is regulated as follows. Uridylyltransferase (UTase) activity is inhibited by glutamine, while glutamine activates uridylyl-removing (UR) activity. Its function is as follows. Modifies, by uridylylation and deuridylylation, the PII regulatory proteins (GlnB and homologs), in response to the nitrogen status of the cell that GlnD senses through the glutamine level. Under low glutamine levels, catalyzes the conversion of the PII proteins and UTP to PII-UMP and PPi, while under higher glutamine levels, GlnD hydrolyzes PII-UMP to PII and UMP (deuridylylation). Thus, controls uridylylation state and activity of the PII proteins, and plays an important role in the regulation of nitrogen assimilation and metabolism. The sequence is that of Bifunctional uridylyltransferase/uridylyl-removing enzyme from Nitrobacter winogradskyi (strain ATCC 25391 / DSM 10237 / CIP 104748 / NCIMB 11846 / Nb-255).